The following is a 653-amino-acid chain: Macrolide export ATP-binding/permease protein MacB (653 aa).

The ABC transporter domain occupies 6 to 244 (IELQGVSRSY…PPLLPCSAHP (239 aa)). Residue 42 to 49 (GSSGSGKS) participates in ATP binding. Helical transmembrane passes span 275 to 295 (LLTMAGIVFGIAAVVTVVGLG), 525 to 545 (FSVLITMVAMIALFIGSLGVM), 576 to 596 (FLIEAVLVCLTGGLLGVLLAL), and 616 to 636 (WPAVSGAFLCACAIGMVFGYW).

Belongs to the ABC transporter superfamily. Macrolide exporter (TC 3.A.1.122) family. As to quaternary structure, homodimer. Part of the tripartite efflux system MacAB-TolC, which is composed of an inner membrane transporter, MacB, a periplasmic membrane fusion protein, MacA, and an outer membrane component, TolC. The complex forms a large protein conduit and can translocate molecules across both the inner and outer membranes. Interacts with MacA.

It is found in the cell inner membrane. Part of the tripartite efflux system MacAB-TolC. MacB is a non-canonical ABC transporter that contains transmembrane domains (TMD), which form a pore in the inner membrane, and an ATP-binding domain (NBD), which is responsible for energy generation. Confers resistance against macrolides. The polypeptide is Macrolide export ATP-binding/permease protein MacB (Sodalis glossinidius (strain morsitans)).